Here is a 615-residue protein sequence, read N- to C-terminus: Dihydroxy-acid dehydratase (615 aa).

Residue D81 participates in Mg(2+) binding. Residue C122 participates in [2Fe-2S] cluster binding. Mg(2+) is bound by residues D123 and K124. An N6-carboxylysine modification is found at K124. C193 lines the [2Fe-2S] cluster pocket. Residue E489 coordinates Mg(2+). S515 serves as the catalytic Proton acceptor.

The protein belongs to the IlvD/Edd family. In terms of assembly, homodimer. The cofactor is [2Fe-2S] cluster. Mg(2+) is required as a cofactor.

It catalyses the reaction (2R)-2,3-dihydroxy-3-methylbutanoate = 3-methyl-2-oxobutanoate + H2O. The catalysed reaction is (2R,3R)-2,3-dihydroxy-3-methylpentanoate = (S)-3-methyl-2-oxopentanoate + H2O. It participates in amino-acid biosynthesis; L-isoleucine biosynthesis; L-isoleucine from 2-oxobutanoate: step 3/4. Its pathway is amino-acid biosynthesis; L-valine biosynthesis; L-valine from pyruvate: step 3/4. Its function is as follows. Functions in the biosynthesis of branched-chain amino acids. Catalyzes the dehydration of (2R,3R)-2,3-dihydroxy-3-methylpentanoate (2,3-dihydroxy-3-methylvalerate) into 2-oxo-3-methylpentanoate (2-oxo-3-methylvalerate) and of (2R)-2,3-dihydroxy-3-methylbutanoate (2,3-dihydroxyisovalerate) into 2-oxo-3-methylbutanoate (2-oxoisovalerate), the penultimate precursor to L-isoleucine and L-valine, respectively. The chain is Dihydroxy-acid dehydratase from Pseudomonas savastanoi pv. phaseolicola (strain 1448A / Race 6) (Pseudomonas syringae pv. phaseolicola (strain 1448A / Race 6)).